The sequence spans 350 residues: Deoxyribonuclease-2-alpha (350 aa).

The signal sequence occupies residues 1–19 (MAAPSSLLLAALLWVPAEA). An intrachain disulfide couples Cys22 to Cys162. N-linked (GlcNAc...) asparagine glycans are attached at residues Asn89, Asn215, Asn269, and Asn293. Intrachain disulfides connect Cys270-Cys350 and Cys311-Cys330. His298 is an active-site residue.

It belongs to the DNase II family. As to expression, ubiquitous.

Its subcellular location is the lysosome. The catalysed reaction is Endonucleolytic cleavage to nucleoside 3'-phosphates and 3'-phosphooligonucleotide end-products.. Functionally, hydrolyzes DNA under acidic conditions with a preference for double-stranded DNA. Plays a major role in the clearance of nucleic acids generated through apoptosis, hence preventing autoinflammation. Necessary for proper fetal development and for definitive erythropoiesis in fetal liver and bone marrow, where it degrades nuclear DNA expelled from erythroid precursor cells. This chain is Deoxyribonuclease-2-alpha (Dnase2), found in Rattus norvegicus (Rat).